Here is a 104-residue protein sequence, read N- to C-terminus: MYAVVVTGGKQYKVAEGDILFVEKLTADVDSTVELDNVLLVGKDNGETVVGKPMVEGAKVTAKVLAQGKAKKVVVFKYKPKKDYRKKQGHRQPYTKIQIEKINA.

Belongs to the bacterial ribosomal protein bL21 family. As to quaternary structure, part of the 50S ribosomal subunit. Contacts protein L20.

Its function is as follows. This protein binds to 23S rRNA in the presence of protein L20. In Clostridium botulinum (strain ATCC 19397 / Type A), this protein is Large ribosomal subunit protein bL21.